The primary structure comprises 644 residues: Exoribonuclease 2 (644 aa).

The 328-residue stretch at 189 to 516 (REDLTALDFV…NHRLLKAVIK (328 aa)) folds into the RNB domain. Residues 561 to 643 (DTRFAAEIVD…ETRSIIARPV (83 aa)) form the S1 motif domain.

This sequence belongs to the RNR ribonuclease family. RNase II subfamily.

It localises to the cytoplasm. The enzyme catalyses Exonucleolytic cleavage in the 3'- to 5'-direction to yield nucleoside 5'-phosphates.. Its function is as follows. Involved in mRNA degradation. Hydrolyzes single-stranded polyribonucleotides processively in the 3' to 5' direction. The protein is Exoribonuclease 2 of Escherichia coli (strain SMS-3-5 / SECEC).